The chain runs to 188 residues: MGTIADDILDDLHGRILKTLDQLRTELAAVRTGRASLHLLDNVRVDYYGTPTPLNQVATLSVPEARLIVVKPWEKSMIPPIEKAIRDGNLGLNPMSDKDLVRVPIPALTEERRKEIVKQVKHKGEEHKIAVRNVRREAKELIEVAEKDGDISGDDAEKALEKMQKETDEGVKKIDEIVAAKEKDVLQV.

Belongs to the RRF family.

The protein localises to the cytoplasm. Responsible for the release of ribosomes from messenger RNA at the termination of protein biosynthesis. May increase the efficiency of translation by recycling ribosomes from one round of translation to another. The protein is Ribosome-recycling factor of Anaeromyxobacter sp. (strain K).